Reading from the N-terminus, the 367-residue chain is tRNA/tmRNA (uracil-C(5))-methyltransferase (367 aa).

The S-adenosyl-L-methionine site is built by Q182, Y210, N215, E231, and D293. C318 serves as the catalytic Nucleophile. Catalysis depends on E352, which acts as the Proton acceptor.

Belongs to the class I-like SAM-binding methyltransferase superfamily. RNA M5U methyltransferase family. TrmA subfamily.

It catalyses the reaction uridine(54) in tRNA + S-adenosyl-L-methionine = 5-methyluridine(54) in tRNA + S-adenosyl-L-homocysteine + H(+). It carries out the reaction uridine(341) in tmRNA + S-adenosyl-L-methionine = 5-methyluridine(341) in tmRNA + S-adenosyl-L-homocysteine + H(+). Functionally, dual-specificity methyltransferase that catalyzes the formation of 5-methyluridine at position 54 (m5U54) in all tRNAs, and that of position 341 (m5U341) in tmRNA (transfer-mRNA). The sequence is that of tRNA/tmRNA (uracil-C(5))-methyltransferase from Neisseria meningitidis serogroup C (strain 053442).